A 377-amino-acid chain; its full sequence is Queuine tRNA-ribosyltransferase (377 aa).

Asp-92 serves as the catalytic Proton acceptor. Residues 92–96 (DSGGF), Asp-146, Gln-190, and Gly-217 each bind substrate. The segment at 248 to 254 (GVGRPED) is RNA binding. Residue Asp-267 is the Nucleophile of the active site. An RNA binding; important for wobble base 34 recognition region spans residues 272-276 (TRHAR). Positions 305, 307, 310, and 337 each coordinate Zn(2+).

The protein belongs to the queuine tRNA-ribosyltransferase family. As to quaternary structure, homodimer. Within each dimer, one monomer is responsible for RNA recognition and catalysis, while the other monomer binds to the replacement base PreQ1. Zn(2+) serves as cofactor.

It catalyses the reaction 7-aminomethyl-7-carbaguanine + guanosine(34) in tRNA = 7-aminomethyl-7-carbaguanosine(34) in tRNA + guanine. It functions in the pathway tRNA modification; tRNA-queuosine biosynthesis. Catalyzes the base-exchange of a guanine (G) residue with the queuine precursor 7-aminomethyl-7-deazaguanine (PreQ1) at position 34 (anticodon wobble position) in tRNAs with GU(N) anticodons (tRNA-Asp, -Asn, -His and -Tyr). Catalysis occurs through a double-displacement mechanism. The nucleophile active site attacks the C1' of nucleotide 34 to detach the guanine base from the RNA, forming a covalent enzyme-RNA intermediate. The proton acceptor active site deprotonates the incoming PreQ1, allowing a nucleophilic attack on the C1' of the ribose to form the product. After dissociation, two additional enzymatic reactions on the tRNA convert PreQ1 to queuine (Q), resulting in the hypermodified nucleoside queuosine (7-(((4,5-cis-dihydroxy-2-cyclopenten-1-yl)amino)methyl)-7-deazaguanosine). The protein is Queuine tRNA-ribosyltransferase of Xylella fastidiosa (strain Temecula1 / ATCC 700964).